We begin with the raw amino-acid sequence, 445 residues long: MGDKEKKPLKYRILTYGCQMNVRDSETIAGLLEGSGFNQAEDLSEADLIVFNTCSVRHSAENKVYGKLGEIASLKKKRPELLIAFGGCMAQLPEVRQKLKKRGVDVVFGTHNIHELPYLIARAKEKRSPVFEVWEKEGSIVEPLPSCRKPGLSAFVNIMFGCNNFCSYCIVPYTRGRERSRKADDIIRELEELAAAGYKEVTLLGQNVNSYGRGLGEKIEFADLLYRANSVAGIERIRFTTSHPKDVSDRLLQAIAECEKLCEHIHAPLQAGSNRILQRMNRNYSREHYLKLVERMRHYVPGVSITSDLIVGFPGETEEDFLETLDMVERVRFDAAFTFLYSQRSGTRAAELAEQIPLEEKKQRLERLNRRQYQIATEINQELQGSIQEVLVEGPSKTNPQKLTSRTRSNRIVIFSGGKDLIGRLINVKITEAKTFSLFGEIFNE.

One can recognise an MTTase N-terminal domain in the interval 9 to 125; the sequence is LKYRILTYGC…LPYLIARAKE (117 aa). [4Fe-4S] cluster is bound by residues Cys18, Cys54, Cys88, Cys162, Cys166, and Cys169. The region spanning 148–378 is the Radical SAM core domain; the sequence is RKPGLSAFVN…NRRQYQIATE (231 aa). Residues 381-444 enclose the TRAM domain; that stretch reads QELQGSIQEV…TFSLFGEIFN (64 aa).

Belongs to the methylthiotransferase family. MiaB subfamily. As to quaternary structure, monomer. The cofactor is [4Fe-4S] cluster.

It localises to the cytoplasm. It carries out the reaction N(6)-dimethylallyladenosine(37) in tRNA + (sulfur carrier)-SH + AH2 + 2 S-adenosyl-L-methionine = 2-methylsulfanyl-N(6)-dimethylallyladenosine(37) in tRNA + (sulfur carrier)-H + 5'-deoxyadenosine + L-methionine + A + S-adenosyl-L-homocysteine + 2 H(+). Its function is as follows. Catalyzes the methylthiolation of N6-(dimethylallyl)adenosine (i(6)A), leading to the formation of 2-methylthio-N6-(dimethylallyl)adenosine (ms(2)i(6)A) at position 37 in tRNAs that read codons beginning with uridine. The chain is tRNA-2-methylthio-N(6)-dimethylallyladenosine synthase from Syntrophomonas wolfei subsp. wolfei (strain DSM 2245B / Goettingen).